Consider the following 168-residue polypeptide: Protein OPG162 (168 aa).

Residues 1–14 (MKSLNRQTVSMFKK) lie on the Intravirion side of the membrane. Residues 15–37 (LSVPAAIMMILSTIISGIGTFLH) traverse the membrane as a helical segment. Over 38–168 (YKEELMPSAC…SVLCVKKFYK (131 aa)) the chain is Virion surface. Residues 54 to 163 (YDKHCYLDTN…CKSTQSVLCV (110 aa)) enclose the C-type lectin domain. Intrachain disulfides connect Cys-75/Cys-162 and Cys-141/Cys-154. A glycan (N-linked (GlcNAc...) asparagine; by host) is linked at Asn-133.

Belongs to the orthopoxvirus OPG162 protein family. In terms of assembly, interacts with protein OPG161. Interacts with protein OPG164. Interacts with protein OPG190.

It localises to the virion membrane. The protein resides in the host Golgi apparatus. Functionally, forms a complex with OPG162 and OPG190 to coordinate the incorporation of OPG164 into wrapped enveloped virion (EV) membranes and, subsequently, the production of actin tails. Therefore plays an essential role in efficient cell-to-cell spread of viral particles. The polypeptide is Protein OPG162 (OPG162) (Homo sapiens (Human)).